Here is a 256-residue protein sequence, read N- to C-terminus: ATP synthase peripheral stalk subunit b, mitochondrial (256 aa).

A mitochondrion-targeting transit peptide spans 1–42 (MLSRVVLSAAATAASSLKNAAFLGPGVLQATRTFHTGQPHLA). Lysine 131 is subject to N6-succinyllysine. Residues lysine 139, lysine 154, lysine 162, lysine 221, lysine 233, and lysine 244 each carry the N6-acetyllysine modification.

The protein belongs to the eukaryotic ATPase B chain family. Component of the ATP synthase complex composed at least of ATP5F1A/subunit alpha, ATP5F1B/subunit beta, ATP5MC1/subunit c (homooctomer), MT-ATP6/subunit a, MT-ATP8/subunit 8, ATP5ME/subunit e, ATP5MF/subunit f, ATP5MG/subunit g, ATP5MK/subunit k, ATP5MJ/subunit j, ATP5F1C/subunit gamma, ATP5F1D/subunit delta, ATP5F1E/subunit epsilon, ATP5PF/subunit F6, ATP5PB/subunit b, ATP5PD/subunit d, ATP5PO/subunit OSCP. ATP synthase complex consists of a soluble F(1) head domain (subunits alpha(3) and beta(3)) - the catalytic core - and a membrane F(0) domain - the membrane proton channel (subunits c, a, 8, e, f, g, k and j). These two domains are linked by a central stalk (subunits gamma, delta, and epsilon) rotating inside the F1 region and a stationary peripheral stalk (subunits F6, b, d, and OSCP).

It is found in the mitochondrion. The protein resides in the mitochondrion inner membrane. Subunit b, of the mitochondrial membrane ATP synthase complex (F(1)F(0) ATP synthase or Complex V) that produces ATP from ADP in the presence of a proton gradient across the membrane which is generated by electron transport complexes of the respiratory chain. ATP synthase complex consist of a soluble F(1) head domain - the catalytic core - and a membrane F(1) domain - the membrane proton channel. These two domains are linked by a central stalk rotating inside the F(1) region and a stationary peripheral stalk. During catalysis, ATP synthesis in the catalytic domain of F(1) is coupled via a rotary mechanism of the central stalk subunits to proton translocation. In vivo, can only synthesize ATP although its ATP hydrolase activity can be activated artificially in vitro. Part of the complex F(0) domain. Part of the complex F(0) domain and the peripheric stalk, which acts as a stator to hold the catalytic alpha(3)beta(3) subcomplex and subunit a/ATP6 static relative to the rotary elements. The protein is ATP synthase peripheral stalk subunit b, mitochondrial of Pongo abelii (Sumatran orangutan).